The following is a 564-amino-acid chain: Dihydroxy-acid dehydratase (564 aa).

Cys51 contributes to the [2Fe-2S] cluster binding site. Asp83 lines the Mg(2+) pocket. Residue Cys124 participates in [2Fe-2S] cluster binding. Mg(2+)-binding residues include Asp125 and Lys126. An N6-carboxylysine modification is found at Lys126. Cys196 lines the [2Fe-2S] cluster pocket. Position 448 (Glu448) interacts with Mg(2+). The active-site Proton acceptor is the Ser474.

Belongs to the IlvD/Edd family. Homodimer. [2Fe-2S] cluster serves as cofactor. Requires Mg(2+) as cofactor.

The enzyme catalyses (2R)-2,3-dihydroxy-3-methylbutanoate = 3-methyl-2-oxobutanoate + H2O. The catalysed reaction is (2R,3R)-2,3-dihydroxy-3-methylpentanoate = (S)-3-methyl-2-oxopentanoate + H2O. It participates in amino-acid biosynthesis; L-isoleucine biosynthesis; L-isoleucine from 2-oxobutanoate: step 3/4. The protein operates within amino-acid biosynthesis; L-valine biosynthesis; L-valine from pyruvate: step 3/4. Functionally, functions in the biosynthesis of branched-chain amino acids. Catalyzes the dehydration of (2R,3R)-2,3-dihydroxy-3-methylpentanoate (2,3-dihydroxy-3-methylvalerate) into 2-oxo-3-methylpentanoate (2-oxo-3-methylvalerate) and of (2R)-2,3-dihydroxy-3-methylbutanoate (2,3-dihydroxyisovalerate) into 2-oxo-3-methylbutanoate (2-oxoisovalerate), the penultimate precursor to L-isoleucine and L-valine, respectively. The sequence is that of Dihydroxy-acid dehydratase from Pyrobaculum calidifontis (strain DSM 21063 / JCM 11548 / VA1).